Consider the following 368-residue polypeptide: Outer membrane protein assembly factor BamC (368 aa).

An N-terminal signal peptide occupies residues 1–18; it reads MTTKFFIGTAIAVSVLSA. Residue Cys-19 is the site of N-palmitoyl cysteine attachment. Cys-19 carries S-diacylglycerol cysteine lipidation.

It belongs to the BamC family. Part of the Bam complex.

It is found in the cell outer membrane. Part of the outer membrane protein assembly complex, which is involved in assembly and insertion of beta-barrel proteins into the outer membrane. The chain is Outer membrane protein assembly factor BamC from Pseudoalteromonas atlantica (strain T6c / ATCC BAA-1087).